Reading from the N-terminus, the 542-residue chain is Propane 2-monooxygenase, hydroxylase component large subunit (542 aa).

6 residues coordinate Fe cation: Glu-97, Glu-127, His-130, Glu-192, Glu-226, and His-229.

This sequence belongs to the TmoA/XamoA family. In terms of assembly, the propane 2-monooxygenase multicomponent enzyme system is composed of an electron transfer component and a monooxygenase component interacting with the effector protein MimD. The electron transfer component is composed of a reductase (MimB), and the monooxygenase component is formed by a large subunit (MimA) and a small subunit (MimC). Requires the presence of the chaperonin-like protein MimG to ensure a productive folding, resulting of a soluble MimA, which leads to the active form of MimABCD. Requires Fe(2+) as cofactor.

It carries out the reaction propane + NADH + O2 + H(+) = propan-2-ol + NAD(+) + H2O. The enzyme catalyses acetone + NADH + O2 + H(+) = hydroxyacetone + NAD(+) + H2O. It catalyses the reaction butan-2-one + NADH + O2 + H(+) = 1-hydroxy-2-butanone + NAD(+) + H2O. The catalysed reaction is phenol + NADH + O2 + H(+) = hydroquinone + NAD(+) + H2O. Functionally, component of the propane 2-monooxygenase multicomponent enzyme system which is involved in the degradation of propane via the O2-dependent hydroxylation of propane. Also involved in the degradation of acetone via the O2-dependent hydroxylation of acetone. Also able to catalyze the oxidation of phenol, methylethylketone (2-butanone), 1-propanol and 2-propanol. The sequence is that of Propane 2-monooxygenase, hydroxylase component large subunit from Mycolicibacterium smegmatis (strain ATCC 700084 / mc(2)155) (Mycobacterium smegmatis).